Consider the following 657-residue polypeptide: Putative serine protease (657 aa).

3 consecutive transmembrane segments (helical) span residues 4–24 (YLATSVRLCLMVCIVGWLLMP), 46–62 (WLLTGLSTWFCIVPSGT), and 109–131 (LLSGVTFSVVLWYPRILVTVLML). The Peptidase S39 domain maps to 239-434 (QPGSDFVECE…ETDRYARTME (196 aa)). Residues histidine 284, aspartate 318, and serine 386 each act as for protease activity in the active site. Residues 513–605 (PLGGLPISNG…PPSTGSVPKS (93 aa)) form a disordered region. Residues 548-559 (HTRRRRRNKKKS) are compositionally biased toward basic residues. Positions 560-569 (KNSETGHGPE) are enriched in basic and acidic residues. Low complexity predominate over residues 571 to 589 (QSQQQSRPSSPIPDDSAPV).

It belongs to the peptidase S39B family.

It is found in the host membrane. In terms of biological role, putative serine protease. The protein is Putative serine protease of Mushroom bacilliform virus (isolate Australia/AUS LF-1) (MBV).